Here is a 230-residue protein sequence, read N- to C-terminus: Esterase OVCA2 (230 aa).

Catalysis depends on charge relay system residues Ser-124, Asp-182, and His-209.

Belongs to the LovG family.

The enzyme catalyses a carboxylic ester + H2O = an alcohol + a carboxylate + H(+). In terms of biological role, exhibits ester hydrolase activity with a strong preference for long-chain alkyl ester substrates and high selectivity against a variety of short, branched, and substituted esters. Is able to hydrolyze ester bonds within a wide range of p-nitrophenyl derivatives (C2-C14) in vitro, with a strong preference toward substrates of &gt;8 carbons. The chain is Esterase OVCA2 (ovca2) from Xenopus tropicalis (Western clawed frog).